Here is a 580-residue protein sequence, read N- to C-terminus: Tripeptidyl-peptidase sed5 (580 aa).

The disordered stretch occupies residues 1–21; sequence MYPLDGSARPHPPGTTRLNSV. The region spanning 181 to 567 is the Peptidase S53 domain; that stretch reads RAQRLIVAEL…RRTLEELRRI (387 aa). Asparagine 236 carries an N-linked (GlcNAc...) asparagine glycan. Catalysis depends on charge relay system residues glutamate 269, aspartate 273, and serine 479. Residues aspartate 523 and isoleucine 524 each coordinate Ca(2+). Asparagine 529 is a glycosylation site (N-linked (GlcNAc...) asparagine). Residues glycine 543, glycine 545, and aspartate 547 each contribute to the Ca(2+) site.

The cofactor is Ca(2+).

Its subcellular location is the secreted. The protein resides in the extracellular space. It catalyses the reaction Release of an N-terminal tripeptide from a polypeptide.. Functionally, secreted tripeptidyl-peptidase which degrades proteins at acidic pHs and is involved in virulence. This chain is Tripeptidyl-peptidase sed5 (sed5), found in Aspergillus fumigatus (strain ATCC MYA-4609 / CBS 101355 / FGSC A1100 / Af293) (Neosartorya fumigata).